Here is a 122-residue protein sequence, read N- to C-terminus: Large ribosomal subunit protein uL14 (122 aa).

This sequence belongs to the universal ribosomal protein uL14 family. As to quaternary structure, part of the 50S ribosomal subunit. Forms a cluster with proteins L3 and L19. In the 70S ribosome, L14 and L19 interact and together make contacts with the 16S rRNA in bridges B5 and B8.

In terms of biological role, binds to 23S rRNA. Forms part of two intersubunit bridges in the 70S ribosome. This is Large ribosomal subunit protein uL14 from Afipia carboxidovorans (strain ATCC 49405 / DSM 1227 / KCTC 32145 / OM5) (Oligotropha carboxidovorans).